Reading from the N-terminus, the 156-residue chain is Arginine repressor (156 aa).

This sequence belongs to the ArgR family.

It localises to the cytoplasm. It participates in amino-acid biosynthesis; L-arginine biosynthesis [regulation]. In terms of biological role, regulates arginine biosynthesis genes. The sequence is that of Arginine repressor from Aliivibrio fischeri (strain ATCC 700601 / ES114) (Vibrio fischeri).